A 177-amino-acid polypeptide reads, in one-letter code: Alkyl hydroperoxide reductase AhpD (177 aa).

Cys-131 functions as the Proton donor in the catalytic mechanism. A disulfide bond links Cys-131 and Cys-134. Cys-134 serves as the catalytic Cysteine sulfenic acid (-SOH) intermediate.

It belongs to the AhpD family.

The catalysed reaction is N(6)-[(R)-dihydrolipoyl]-L-lysyl-[lipoyl-carrier protein] + a hydroperoxide = N(6)-[(R)-lipoyl]-L-lysyl-[lipoyl-carrier protein] + an alcohol + H2O. Functionally, antioxidant protein with alkyl hydroperoxidase activity. Required for the reduction of the AhpC active site cysteine residues and for the regeneration of the AhpC enzyme activity. The chain is Alkyl hydroperoxide reductase AhpD from Solibacter usitatus (strain Ellin6076).